Consider the following 953-residue polypeptide: Translation initiation factor IF-2 (953 aa).

Disordered stretches follow at residues Lys-52–Ala-241 and Thr-279–Lys-363. 3 stretches are compositionally biased toward basic and acidic residues: residues Thr-80 to Gln-89, Phe-98 to Ala-111, and Gln-140 to Lys-188. Residues Arg-191 to Ser-207 show a composition bias toward polar residues. Positions Arg-229–Ala-241 are enriched in basic and acidic residues. A compositionally biased stretch (polar residues) spans Lys-282–Thr-291. The span at Ala-300–Lys-317 shows a compositional bias: basic and acidic residues. Over residues Ser-322–Asn-338 the composition is skewed to low complexity. Residues Lys-339–Asn-348 are compositionally biased toward basic residues. The tr-type G domain maps to Glu-454–Lys-623. Residues Gly-463–Thr-470 are G1. Gly-463–Thr-470 is a binding site for GTP. Residues Gly-488–His-492 are G2. The G3 stretch occupies residues Asp-509–Gly-512. Residues Asp-509–His-513 and Asn-563–Asp-566 contribute to the GTP site. Residues Asn-563 to Asp-566 form a G4 region. The tract at residues Ser-599–Lys-601 is G5.

This sequence belongs to the TRAFAC class translation factor GTPase superfamily. Classic translation factor GTPase family. IF-2 subfamily.

The protein localises to the cytoplasm. In terms of biological role, one of the essential components for the initiation of protein synthesis. Protects formylmethionyl-tRNA from spontaneous hydrolysis and promotes its binding to the 30S ribosomal subunits. Also involved in the hydrolysis of GTP during the formation of the 70S ribosomal complex. This is Translation initiation factor IF-2 from Streptococcus pyogenes serotype M4 (strain MGAS10750).